We begin with the raw amino-acid sequence, 601 residues long: Replication protein A 70 kDa DNA-binding subunit (601 aa).

Residues 107-172 (MPGKIGDPTP…NTPGGSSKVV (66 aa)) form a disordered region. The segment covering 124–135 (APSTAPAPTARP) has biased composition (low complexity). Positions 137–153 (QPQNGSDGSTYRPSAQS) are enriched in polar residues. Positions 184–268 (WTIRARVTNK…LKNDYEMTLN (85 aa)) form a DNA-binding region, OB. Phosphoserine is present on S370. The C4-type zinc finger occupies 466 to 488 (CPSKDCNKKVVDQQNGMFRCEKC).

Belongs to the replication factor A protein 1 family. Component of the heterotrimeric canonical replication protein A complex (RPA).

Its subcellular location is the nucleus. It localises to the PML body. Its function is as follows. As part of the heterotrimeric replication protein A complex (RPA/RP-A), binds and stabilizes single-stranded DNA intermediates, that form during DNA replication or upon DNA stress. It prevents their reannealing and in parallel, recruits and activates different proteins and complexes involved in DNA metabolism. Thereby, it plays an essential role both in DNA replication and the cellular response to DNA damage. The sequence is that of Replication protein A 70 kDa DNA-binding subunit (rpa1) from Danio rerio (Zebrafish).